Reading from the N-terminus, the 254-residue chain is Probable pectate lyase E (254 aa).

An N-terminal signal peptide occupies residues methionine 1–alanine 17. Asparagine 175 carries an N-linked (GlcNAc...) asparagine glycan. A disordered region spans residues asparagine 228–cysteine 254.

It belongs to the polysaccharide lyase 3 family. It depends on Ca(2+) as a cofactor.

It localises to the secreted. It catalyses the reaction Eliminative cleavage of (1-&gt;4)-alpha-D-galacturonan to give oligosaccharides with 4-deoxy-alpha-D-galact-4-enuronosyl groups at their non-reducing ends.. Its function is as follows. Pectinolytic enzyme consist of four classes of enzymes: pectin lyase, polygalacturonase, pectin methylesterase and rhamnogalacturonase. Among pectinolytic enzymes, pectin lyase is the most important in depolymerization of pectin, since it cleaves internal glycosidic bonds of highly methylated pectins. Favors pectate, the anion, over pectin, the methyl ester. The sequence is that of Probable pectate lyase E (plyE) from Aspergillus clavatus (strain ATCC 1007 / CBS 513.65 / DSM 816 / NCTC 3887 / NRRL 1 / QM 1276 / 107).